Here is a 398-residue protein sequence, read N- to C-terminus: Putative molybdopterin biosynthesis protein MJ0666 (398 aa).

The protein belongs to the MoeA family.

The protein operates within cofactor biosynthesis; molybdopterin biosynthesis. The polypeptide is Putative molybdopterin biosynthesis protein MJ0666 (Methanocaldococcus jannaschii (strain ATCC 43067 / DSM 2661 / JAL-1 / JCM 10045 / NBRC 100440) (Methanococcus jannaschii)).